Consider the following 40-residue polypeptide: Metallothionein-1 (40 aa).

Belongs to the metallothionein superfamily. Type 5 family.

Its function is as follows. This protein binds cations of several transition elements. It is thought to be involved in detoxification processes. The polypeptide is Metallothionein-1 (MtnA) (Drosophila ananassae (Fruit fly)).